Consider the following 142-residue polypeptide: Chorion class A protein Ld12 (142 aa).

A signal peptide spans Met1 to Ser18.

It belongs to the chorion protein family.

Functionally, this protein is one of many from the eggshell of the gypsy moth. This Lymantria dispar (Gypsy moth) protein is Chorion class A protein Ld12.